We begin with the raw amino-acid sequence, 231 residues long: 7-cyano-7-deazaguanine synthase (231 aa).

8 to 18 (FSGGQDSTTCL) is an ATP binding site. Residues Cys188, Cys197, Cys200, and Cys203 each contribute to the Zn(2+) site.

This sequence belongs to the QueC family. Zn(2+) serves as cofactor.

The enzyme catalyses 7-carboxy-7-deazaguanine + NH4(+) + ATP = 7-cyano-7-deazaguanine + ADP + phosphate + H2O + H(+). Its pathway is purine metabolism; 7-cyano-7-deazaguanine biosynthesis. Its function is as follows. Catalyzes the ATP-dependent conversion of 7-carboxy-7-deazaguanine (CDG) to 7-cyano-7-deazaguanine (preQ(0)). The protein is 7-cyano-7-deazaguanine synthase of Citrobacter koseri (strain ATCC BAA-895 / CDC 4225-83 / SGSC4696).